Consider the following 353-residue polypeptide: Photosystem II protein D1 (353 aa).

Thr-2 bears the N-acetylthreonine mark. Phosphothreonine is present on Thr-2. Transmembrane regions (helical) follow at residues 29 to 46 (YIGWFGVLMIPTLLTATS), 118 to 133 (HFLLGVACYMGREWEL), and 142 to 156 (WIAVAYSAPVAAATA). Residue His-118 participates in chlorophyll a binding. Residue Tyr-126 participates in pheophytin a binding. Residues Asp-170 and Glu-189 each contribute to the [CaMn4O5] cluster site. Residues 197-218 (FHMLGVAGVFGGSLFSAMHGSL) form a helical membrane-spanning segment. His-198 lines the chlorophyll a pocket. A quinone contacts are provided by residues His-215 and 264 to 265 (SF). His-215 contacts Fe cation. A Fe cation-binding site is contributed by His-272. The chain crosses the membrane as a helical span at residues 274–288 (FLAAWPVVGIWFTAL). Residues His-332, Glu-333, Asp-342, and Ala-344 each contribute to the [CaMn4O5] cluster site. Positions 345–353 (AVEAPSING) are excised as a propeptide.

It belongs to the reaction center PufL/M/PsbA/D family. As to quaternary structure, PSII is composed of 1 copy each of membrane proteins PsbA, PsbB, PsbC, PsbD, PsbE, PsbF, PsbH, PsbI, PsbJ, PsbK, PsbL, PsbM, PsbT, PsbX, PsbY, PsbZ, Psb30/Ycf12, at least 3 peripheral proteins of the oxygen-evolving complex and a large number of cofactors. It forms dimeric complexes. The cofactor is The D1/D2 heterodimer binds P680, chlorophylls that are the primary electron donor of PSII, and subsequent electron acceptors. It shares a non-heme iron and each subunit binds pheophytin, quinone, additional chlorophylls, carotenoids and lipids. D1 provides most of the ligands for the Mn4-Ca-O5 cluster of the oxygen-evolving complex (OEC). There is also a Cl(-1) ion associated with D1 and D2, which is required for oxygen evolution. The PSII complex binds additional chlorophylls, carotenoids and specific lipids.. In terms of processing, tyr-161 forms a radical intermediate that is referred to as redox-active TyrZ, YZ or Y-Z. Post-translationally, C-terminally processed by CTPA; processing is essential to allow assembly of the oxygen-evolving complex and thus photosynthetic growth.

Its subcellular location is the plastid. The protein resides in the chloroplast thylakoid membrane. The enzyme catalyses 2 a plastoquinone + 4 hnu + 2 H2O = 2 a plastoquinol + O2. Photosystem II (PSII) is a light-driven water:plastoquinone oxidoreductase that uses light energy to abstract electrons from H(2)O, generating O(2) and a proton gradient subsequently used for ATP formation. It consists of a core antenna complex that captures photons, and an electron transfer chain that converts photonic excitation into a charge separation. The D1/D2 (PsbA/PsbD) reaction center heterodimer binds P680, the primary electron donor of PSII as well as several subsequent electron acceptors. This chain is Photosystem II protein D1, found in Medicago sativa (Alfalfa).